The sequence spans 142 residues: Large ribosomal subunit protein mL42 (142 aa).

The transit peptide at 1-31 (MAAAVKWAISNRTIWKHLLPIQNGALSSACH) directs the protein to the mitochondrion.

Belongs to the mitochondrion-specific ribosomal protein mL42 family. Component of the mitochondrial ribosome large subunit (39S) which comprises a 16S rRNA and about 50 distinct proteins. Component of the mitochondrial ribosome small subunit (28S) which comprises a 12S rRNA and about 30 distinct proteins.

The protein resides in the mitochondrion. In Mus musculus (Mouse), this protein is Large ribosomal subunit protein mL42 (Mrpl42).